Here is a 334-residue protein sequence, read N- to C-terminus: MASVKEGDYQALKEEIKKIMKQPGYDDGSAGPVLVRLAWHASGNFSLVEHNGGSNGAGMRFPPESVDPANAGLHYAISFLLPLQSANSWISHADLWTLAGVTAIEAMGGPQIPWEPGRLDYESEQAAVEHRGDVSNRLPDGALGAAHIRDVFGRMGFSDQEIVALSGAHNLGRCHADRSGFDGPWVVNPTRFSNQYFKLLLRPIWKPRQWDGPFQYEAIVAGTRLMMLPTDMALIEDPSFRPWVEKYAADQNLFFKDFANAFGKLIELGVDRDDTGFARLAKKAAEEGKPLDKTAPPAGDETCPVSGAVGGGVQRAAGGGGCPFMAMQNREAKL.

His-40 functions as the Proton acceptor in the catalytic mechanism. Residue His-169 coordinates heme b. The active-site Tryptophan radical intermediate is the Trp-185.

It belongs to the peroxidase family. Cytochrome c peroxidase subfamily. Heme b serves as cofactor.

Destroys radicals which are normally produced within the cells and which are toxic to biological systems. In Cryptococcus neoformans var. neoformans serotype D (strain JEC21 / ATCC MYA-565) (Filobasidiella neoformans), this protein is Putative heme-binding peroxidase.